Reading from the N-terminus, the 441-residue chain is GTPase Der (441 aa).

EngA-type G domains follow at residues 4 to 169 and 178 to 353; these read PVVA…PDSS and PRVA…ENNS. Residues 10–17, 57–61, 120–123, 184–191, 231–235, and 296–299 each bind GTP; these read GRPNVGKS, DTGGI, NKVD, GKPNVGKS, DTAGL, and NKWD. The KH-like domain occupies 354–438; sequence MRVATGVLNE…ALKFITRERK (85 aa).

Belongs to the TRAFAC class TrmE-Era-EngA-EngB-Septin-like GTPase superfamily. EngA (Der) GTPase family. In terms of assembly, associates with the 50S ribosomal subunit.

GTPase that plays an essential role in the late steps of ribosome biogenesis. The polypeptide is GTPase Der (Agathobacter rectalis (strain ATCC 33656 / DSM 3377 / JCM 17463 / KCTC 5835 / VPI 0990) (Eubacterium rectale)).